A 3073-amino-acid chain; its full sequence is Adhesion G-protein coupled receptor G4 (3073 aa).

Positions 1–25 are cleaved as a signal peptide; that stretch reads MRKHILHQRLCGLILVSSFIFLTDS. Residues 26-2691 lie on the Extracellular side of the membrane; the sequence is LSLKGKRLDF…RSTVDAVNER (2666 aa). Positions 29–228 constitute a Pentraxin (PTX) domain; the sequence is KGKRLDFYGE…SPTVDRRLRC (200 aa). 2 disulfides stabilise this stretch: Cys-58-Cys-123 and Cys-200-Cys-228. Asn-233 is a glycosylation site (N-linked (GlcNAc...) asparagine). The segment at 253–272 is disordered; it reads SQTTGLNPHKTSHSSTLLPE. N-linked (GlcNAc...) asparagine glycosylation is present at Asn-662. Composition is skewed to polar residues over residues 671-696 and 929-951; these read GNAT…ESKV and GNSA…SSST. Disordered stretches follow at residues 671–697 and 924–951; these read GNAT…SKVT and SEKS…SSST. Residues Asn-1141, Asn-1304, and Asn-1495 are each glycosylated (N-linked (GlcNAc...) asparagine). Disordered stretches follow at residues 1565–1595, 1741–1760, and 1945–1972; these read FTSS…AGPT, TLTN…STPT, and ITLS…SDSR. Polar residues predominate over residues 1945–1954; the sequence is ITLSSNPSVN. The segment covering 1955–1972 has biased composition (low complexity); the sequence is SRATSPTWSSSSLPSDSR. In terms of domain architecture, GAIN-B spans 2535–2684; sequence SSEEVIAPQI…GVLMDLSRST (150 aa). 2 disulfide bridges follow: Cys-2635–Cys-2666 and Cys-2654–Cys-2668. The GPS stretch occupies residues 2635-2684; it reads CAFWDFDTNNGLGGWNPSGCKLKESNINYTICQCNHLTHFGVLMDLSRST. The segment at 2673–2684 is stachel; it reads HFGVLMDLSRST. A helical transmembrane segment spans residues 2692 to 2712; it reads ILVIITYTGCGISSIFLGIAM. Topologically, residues 2713-2728 are cytoplasmic; that stretch reads VTYIAFHKLRKDYPSK. The helical transmembrane segment at 2729 to 2749 threads the bilayer; that stretch reads ILINLCTALLMLNLAFLVNSW. The Extracellular portion of the chain corresponds to 2750-2755; that stretch reads LTSFQK. Residues 2756–2776 form a helical membrane-spanning segment; sequence VGLCITAAVALHYFLLVSLTW. Cys-2759 and Cys-2836 are oxidised to a cystine. Topologically, residues 2777 to 2798 are cytoplasmic; that stretch reads MGLEAVHMYFALVKVFNTYIPN. A helical transmembrane segment spans residues 2799 to 2819; that stretch reads YILKFCLAGWGIPAITVAIIL. The Extracellular portion of the chain corresponds to 2820-2842; it reads SVRKDLYGTLSPTTPFCWIKDDH. Residues 2843–2863 traverse the membrane as a helical segment; sequence IFYISVVAYFCLIFLMNLSMF. Over 2864-2892 the chain is Cytoplasmic; that stretch reads CTVLVQLTSVKSQSQKTRKKMILNDLKGT. A helical transmembrane segment spans residues 2893 to 2913; sequence ISLTFLLGLTWGFAFFAWGPV. Position 2914 (Arg-2914) is a topological domain, extracellular. A helical transmembrane segment spans residues 2915 to 2935; that stretch reads IFFLYLFAICNTLQGFLIFVF. The Cytoplasmic segment spans residues 2936 to 3073; sequence YCVMKESVRE…SSGLGEMFNL (138 aa).

It belongs to the G-protein coupled receptor 2 family. Adhesion G-protein coupled receptor (ADGR) subfamily. As to quaternary structure, homodimer; homodimerizes via its Pentraxin domain in a calcium-independent manner. Heterodimer of 2 chains generated by proteolytic processing; the large extracellular N-terminal fragment and the membrane-bound C-terminal fragment predominantly remain associated and non-covalently linked. Post-translationally, autoproteolytically processed at the GPS region of the GAIN-B domain; this cleavage modulates receptor activity.

The protein resides in the membrane. Forms a heterodimer of 2 chains generated by proteolytic processing that remain associated through non-covalent interactions mediated by the GAIN-B domain. In the inactivated receptor, the Stachel sequence (also named stalk) is embedded in the GAIN-B domain, where it adopts a beta-strand conformation. On activation, the Stachel moves into the 7 transmembrane region and adopts a twisted hook-shaped configuration that forms contacts within the receptor, leading to coupling of a G-alpha protein, which activates signaling. The cleaved GAIN-B and N-terminal domains can then dissociate from the rest of the receptor. Functionally, orphan adhesion G-protein coupled receptor (aGPCR). Ligand binding causes a conformation change that triggers signaling via guanine nucleotide-binding proteins (G proteins) and modulates the activity of downstream effectors, such as adenylate cyclase. ADGRG4 is coupled to G(s) G proteins and mediates activation of adenylate cyclase activity. May be act as sensor of mechanical forces. The chain is Adhesion G-protein coupled receptor G4 from Mus musculus (Mouse).